The following is a 365-amino-acid chain: UDP-N-acetylglucosamine--N-acetylmuramyl-(pentapeptide) pyrophosphoryl-undecaprenol N-acetylglucosamine transferase (365 aa).

Residues 10–12, Asn124, Arg165, Ser193, Ile248, and Gln293 contribute to the UDP-N-acetyl-alpha-D-glucosamine site; that span reads TGG.

It belongs to the glycosyltransferase 28 family. MurG subfamily.

Its subcellular location is the cell inner membrane. It catalyses the reaction di-trans,octa-cis-undecaprenyl diphospho-N-acetyl-alpha-D-muramoyl-L-alanyl-D-glutamyl-meso-2,6-diaminopimeloyl-D-alanyl-D-alanine + UDP-N-acetyl-alpha-D-glucosamine = di-trans,octa-cis-undecaprenyl diphospho-[N-acetyl-alpha-D-glucosaminyl-(1-&gt;4)]-N-acetyl-alpha-D-muramoyl-L-alanyl-D-glutamyl-meso-2,6-diaminopimeloyl-D-alanyl-D-alanine + UDP + H(+). It participates in cell wall biogenesis; peptidoglycan biosynthesis. Cell wall formation. Catalyzes the transfer of a GlcNAc subunit on undecaprenyl-pyrophosphoryl-MurNAc-pentapeptide (lipid intermediate I) to form undecaprenyl-pyrophosphoryl-MurNAc-(pentapeptide)GlcNAc (lipid intermediate II). The chain is UDP-N-acetylglucosamine--N-acetylmuramyl-(pentapeptide) pyrophosphoryl-undecaprenol N-acetylglucosamine transferase from Geotalea uraniireducens (strain Rf4) (Geobacter uraniireducens).